A 263-amino-acid chain; its full sequence is Oxidoreductase tpcG (263 aa).

This sequence belongs to the avfA family. As to expression, specifically expressed in conidia.

Its pathway is secondary metabolite biosynthesis. In terms of biological role, oxidoreductase; part of the gene cluster that mediates the biosynthesis of trypacidin, a mycotoxin with antiprotozoal activity and that plays a role in the infection process. The pathway begins with the synthesis of atrochrysone thioester by the polyketide synthase (PKS) tpcC. The atrochrysone carboxyl ACP thioesterase tpcB then breaks the thioester bond and releases the atrochrysone carboxylic acid from tpcC. The decarboxylase tpcK converts atrochrysone carboxylic acid to atrochrysone which is further reduced into emodin anthrone. The next step is performed by the emodin anthrone oxygenase tpcL that catalyzes the oxidation of emodinanthrone to emodin. Emodin O-methyltransferase encoded by tpcA catalyzes methylation of the 8-hydroxy group of emodin to form questin. Ring cleavage of questin by questin oxidase tpcI leads to desmethylsulochrin via several intermediates including questin epoxide. Another methylation step catalyzed by tpcM leads to the formation of sulochrin which is further converted to monomethylsulfochrin by tpcH. Finally, the tpcJ catalyzes the conversion of monomethylsulfochrin to trypacidin. Trypacidin is toxic for human pulmonary and bronchial epithelial cells by initiating the intracellular formation of nitric oxide (NO) and hydrogen peroxide (H(2)O(2)), thus triggering host necrotic cell death. The trypacidin pathway is also able to produce endocrocin via a distinct route from the endocrocin Enc pathway. This chain is Oxidoreductase tpcG, found in Aspergillus fumigatus (strain ATCC MYA-4609 / CBS 101355 / FGSC A1100 / Af293) (Neosartorya fumigata).